The chain runs to 165 residues: Urease accessory protein UreE (165 aa).

The protein belongs to the UreE family.

It is found in the cytoplasm. Its function is as follows. Involved in urease metallocenter assembly. Binds nickel. Probably functions as a nickel donor during metallocenter assembly. This chain is Urease accessory protein UreE, found in Micrococcus luteus (strain ATCC 4698 / DSM 20030 / JCM 1464 / CCM 169 / CCUG 5858 / IAM 1056 / NBRC 3333 / NCIMB 9278 / NCTC 2665 / VKM Ac-2230) (Micrococcus lysodeikticus).